The chain runs to 398 residues: Phosphoglycerate kinase (398 aa).

Substrate-binding positions include 21 to 23, Arg36, 59 to 62, Arg119, and Arg157; these read DFN and HLGR. ATP is bound by residues Lys208, Gly296, Glu327, and 354 to 357; that span reads GGDS.

The protein belongs to the phosphoglycerate kinase family. In terms of assembly, monomer.

The protein resides in the cytoplasm. It carries out the reaction (2R)-3-phosphoglycerate + ATP = (2R)-3-phospho-glyceroyl phosphate + ADP. The protein operates within carbohydrate degradation; glycolysis; pyruvate from D-glyceraldehyde 3-phosphate: step 2/5. This is Phosphoglycerate kinase from Streptococcus sanguinis (strain SK36).